A 76-amino-acid polypeptide reads, in one-letter code: Translation initiation factor IF-1 (76 aa).

Residues 1–76 (MEDMAKKDGV…TRGRIVYRYK (76 aa)) form the S1-like domain.

Belongs to the IF-1 family. Component of the 30S ribosomal translation pre-initiation complex which assembles on the 30S ribosome in the order IF-2 and IF-3, IF-1 and N-formylmethionyl-tRNA(fMet); mRNA recruitment can occur at any time during PIC assembly.

It is found in the cytoplasm. One of the essential components for the initiation of protein synthesis. Stabilizes the binding of IF-2 and IF-3 on the 30S subunit to which N-formylmethionyl-tRNA(fMet) subsequently binds. Helps modulate mRNA selection, yielding the 30S pre-initiation complex (PIC). Upon addition of the 50S ribosomal subunit IF-1, IF-2 and IF-3 are released leaving the mature 70S translation initiation complex. This Renibacterium salmoninarum (strain ATCC 33209 / DSM 20767 / JCM 11484 / NBRC 15589 / NCIMB 2235) protein is Translation initiation factor IF-1.